The chain runs to 495 residues: Trimethylamine methyltransferase MttB1 (495 aa).

Residue O334 is a non-standard amino acid, pyrrolysine.

It belongs to the trimethylamine methyltransferase family. Can form a complex with MttC.

The enzyme catalyses Co(I)-[trimethylamine-specific corrinoid protein] + trimethylamine + H(+) = methyl-Co(III)-[trimethylamine-specific corrinoid protein] + dimethylamine. It functions in the pathway one-carbon metabolism; methanogenesis from trimethylamine. Functionally, catalyzes the transfer of a methyl group from trimethylamine to the corrinoid cofactor of MttC. This is Trimethylamine methyltransferase MttB1 (mttB1) from Methanosarcina mazei (strain ATCC BAA-159 / DSM 3647 / Goe1 / Go1 / JCM 11833 / OCM 88) (Methanosarcina frisia).